The primary structure comprises 572 residues: NADP-dependent malic enzyme (572 aa).

Met1 carries the N-acetylmethionine modification. Catalysis depends on Tyr102, which acts as the Proton donor. An NADP(+)-binding site is contributed by Arg155. The active-site Proton acceptor is Lys173. Residues Glu245, Asp246, and Asp269 each coordinate a divalent metal cation. Residues Asp269 and 301–318 each bind NADP(+); that span reads GAGEAALGIAHLIVMALE. Ser336 carries the phosphoserine modification. Asn408 contacts NADP(+).

It belongs to the malic enzymes family. In terms of assembly, homotetramer. Mg(2+) serves as cofactor. Requires Mn(2+) as cofactor. Expressed in all tissues tested including liver, placenta and white adipose tissue.

The protein resides in the cytoplasm. The catalysed reaction is (S)-malate + NADP(+) = pyruvate + CO2 + NADPH. The enzyme catalyses oxaloacetate + H(+) = pyruvate + CO2. Functionally, catalyzes the oxidative decarboxylation of (S)-malate in the presence of NADP(+) and divalent metal ions, and decarboxylation of oxaloacetate. The chain is NADP-dependent malic enzyme from Homo sapiens (Human).